The sequence spans 264 residues: tRNA (guanine-N(1)-)-methyltransferase (264 aa).

S-adenosyl-L-methionine is bound at residue isoleucine 149–leucine 154.

Belongs to the RNA methyltransferase TrmD family. In terms of assembly, homodimer.

The protein localises to the cytoplasm. It catalyses the reaction guanosine(37) in tRNA + S-adenosyl-L-methionine = N(1)-methylguanosine(37) in tRNA + S-adenosyl-L-homocysteine + H(+). Its function is as follows. Specifically methylates guanosine-37 in various tRNAs. In Methylobacillus flagellatus (strain ATCC 51484 / DSM 6875 / VKM B-1610 / KT), this protein is tRNA (guanine-N(1)-)-methyltransferase.